We begin with the raw amino-acid sequence, 121 residues long: Large ribosomal subunit protein bL20 (121 aa).

The protein belongs to the bacterial ribosomal protein bL20 family.

Its function is as follows. Binds directly to 23S ribosomal RNA and is necessary for the in vitro assembly process of the 50S ribosomal subunit. It is not involved in the protein synthesizing functions of that subunit. This chain is Large ribosomal subunit protein bL20, found in Francisella tularensis subsp. mediasiatica (strain FSC147).